The chain runs to 271 residues: Uridine-cytidine kinase 1-A (271 aa).

Position 24 to 32 (24 to 32 (GGTASGKST)) interacts with ATP. Substrate-binding residues include aspartate 81, tyrosine 109, histidine 114, arginine 163, arginine 172, and glutamine 180. Residue aspartate 209 participates in ATP binding. The tract at residues 241 to 271 (SQKRTFPGQGESGGLILPGKRTHLESSSRPH) is disordered. Positions 262-271 (THLESSSRPH) are enriched in basic and acidic residues.

Belongs to the uridine kinase family.

The catalysed reaction is uridine + ATP = UMP + ADP + H(+). The enzyme catalyses cytidine + ATP = CMP + ADP + H(+). It functions in the pathway pyrimidine metabolism; CTP biosynthesis via salvage pathway; CTP from cytidine: step 1/3. The protein operates within pyrimidine metabolism; UMP biosynthesis via salvage pathway; UMP from uridine: step 1/1. In terms of biological role, phosphorylates uridine and cytidine to uridine monophosphate and cytidine monophosphate. Does not phosphorylate deoxyribonucleosides or purine ribonucleosides. Can use ATP or GTP as a phosphate donor. In Xenopus laevis (African clawed frog), this protein is Uridine-cytidine kinase 1-A (uck1-a).